A 227-amino-acid chain; its full sequence is Small ribosomal subunit protein uS7 (227 aa).

Acidic residues-rich tracts occupy residues 1–12 (MSESDTDPDIDD) and 20–31 (NDVDVAVDESES). The disordered stretch occupies residues 1–43 (MSESDTDPDIDDDAHNNGDNDVDVAVDESESAETTTDTDTASA). Residues 32 to 43 (AETTTDTDTASA) are compositionally biased toward low complexity.

The protein belongs to the universal ribosomal protein uS7 family. In terms of assembly, part of the 30S ribosomal subunit.

Its function is as follows. One of the primary rRNA binding proteins, it binds directly to 16S rRNA where it nucleates assembly of the head domain of the 30S subunit. Is located at the subunit interface close to the decoding center. In Haloquadratum walsbyi (strain DSM 16790 / HBSQ001), this protein is Small ribosomal subunit protein uS7.